We begin with the raw amino-acid sequence, 237 residues long: Thiamine-phosphate synthase (237 aa).

Residues 41–45 (QLRDK) and N73 each bind 4-amino-2-methyl-5-(diphosphooxymethyl)pyrimidine. Residues D74 and D93 each contribute to the Mg(2+) site. Residue S112 participates in 4-amino-2-methyl-5-(diphosphooxymethyl)pyrimidine binding. Position 143–145 (143–145 (TPT)) interacts with 2-[(2R,5Z)-2-carboxy-4-methylthiazol-5(2H)-ylidene]ethyl phosphate. K146 serves as a coordination point for 4-amino-2-methyl-5-(diphosphooxymethyl)pyrimidine. Position 192 (G192) interacts with 2-[(2R,5Z)-2-carboxy-4-methylthiazol-5(2H)-ylidene]ethyl phosphate.

This sequence belongs to the thiamine-phosphate synthase family. Mg(2+) is required as a cofactor.

The enzyme catalyses 2-[(2R,5Z)-2-carboxy-4-methylthiazol-5(2H)-ylidene]ethyl phosphate + 4-amino-2-methyl-5-(diphosphooxymethyl)pyrimidine + 2 H(+) = thiamine phosphate + CO2 + diphosphate. It catalyses the reaction 2-(2-carboxy-4-methylthiazol-5-yl)ethyl phosphate + 4-amino-2-methyl-5-(diphosphooxymethyl)pyrimidine + 2 H(+) = thiamine phosphate + CO2 + diphosphate. It carries out the reaction 4-methyl-5-(2-phosphooxyethyl)-thiazole + 4-amino-2-methyl-5-(diphosphooxymethyl)pyrimidine + H(+) = thiamine phosphate + diphosphate. Its pathway is cofactor biosynthesis; thiamine diphosphate biosynthesis; thiamine phosphate from 4-amino-2-methyl-5-diphosphomethylpyrimidine and 4-methyl-5-(2-phosphoethyl)-thiazole: step 1/1. Its function is as follows. Condenses 4-methyl-5-(beta-hydroxyethyl)thiazole monophosphate (THZ-P) and 2-methyl-4-amino-5-hydroxymethyl pyrimidine pyrophosphate (HMP-PP) to form thiamine monophosphate (TMP). In Arthrobacter sp. (strain FB24), this protein is Thiamine-phosphate synthase.